Here is a 56-residue protein sequence, read N- to C-terminus: Large ribosomal subunit protein bL33 (56 aa).

Residues 1 to 12 (MATKGGRDKIKL) are compositionally biased toward basic and acidic residues. Residues 1-24 (MATKGGRDKIKLESTAGTGHFYTT) form a disordered region. A compositionally biased stretch (polar residues) spans 15 to 24 (TAGTGHFYTT).

Belongs to the bacterial ribosomal protein bL33 family.

In Paracidovorax citrulli (strain AAC00-1) (Acidovorax citrulli), this protein is Large ribosomal subunit protein bL33.